A 634-amino-acid chain; its full sequence is Tyrosine-protein kinase transforming protein erbB (634 aa).

In terms of domain architecture, Protein kinase spans 132 to 399 (FKKVKVLGSG…KMARDPPRYL (268 aa)). ATP-binding positions include 138 to 146 (LGSGAFGTV) and K165. The Proton acceptor role is filled by D257.

This sequence belongs to the protein kinase superfamily. Tyr protein kinase family. EGF receptor subfamily.

It carries out the reaction L-tyrosyl-[protein] + ATP = O-phospho-L-tyrosyl-[protein] + ADP + H(+). In Avian leukosis virus (ALV), this protein is Tyrosine-protein kinase transforming protein erbB (V-ERBB).